Consider the following 261-residue polypeptide: Claudin-18 (261 aa).

At 1 to 6 (MATTTC) the chain is on the cytoplasmic side. Residues 7-27 (QVVGLLLSLLGLAGCIAATGM) traverse the membrane as a helical segment. At 28–80 (DMWSTQDLYDNPVTSVFQYEGLWRSCVQQSSGFTECRPYFTILGLPAMLQAVR) the chain is on the extracellular side. The chain crosses the membrane as a helical span at residues 81 to 101 (ALMIVGIVLGVIGILVSIFAL). Topologically, residues 102 to 122 (KCIRIGSMDDSAKAKMTLTSG) are cytoplasmic. The chain crosses the membrane as a helical span at residues 123–143 (IMFIISGVCAIIGVSVFANML). Residues 144 to 173 (VTNFWMSTANMYSGMGGMVQTVQTRYTFGA) are Extracellular-facing. A helical membrane pass occupies residues 174–194 (ALFVGWIAGGLTLIGGVMMCI). Residues 195–261 (ACRGLTPDDR…QSHPTKYDYV (67 aa)) are Cytoplasmic-facing. Positions 195-261 (ACRGLTPDDR…QSHPTKYDYV (67 aa)) are required for role in regulation of RANKL-induced osteoclast differentiation. At Ser214 the chain carries Phosphoserine. The segment at 242 to 261 (DGGARTEDDEQSHPTKYDYV) is disordered.

Belongs to the claudin family. In terms of assembly, interacts with TJP2/ZO-2. Interacts with TJP1/ZO-1. Interacts with YAP1 (phosphorylated); the interaction sequesters YAP1 away from the nucleus and thereby restricts transcription of YAP1 target genes. Interacts with CLDN19. Expressed in the lung (at protein level).

The protein localises to the cell junction. The protein resides in the tight junction. It is found in the cell membrane. Its function is as follows. Involved in alveolar fluid homeostasis via regulation of alveolar epithelial tight junction composition and therefore ion transport and solute permeability, potentially via downstream regulation of the actin cytoskeleton organization and beta-2-adrenergic signaling. Required for lung alveolarization and maintenance of the paracellular alveolar epithelial barrier. Acts to maintain epithelial progenitor cell proliferation and organ size, via regulation of YAP1 localization away from the nucleus and thereby restriction of YAP1 target gene transcription. Acts as a negative regulator of RANKL-induced osteoclast differentiation, potentially via relocation of TJP2/ZO-2 away from the nucleus, subsequently involved in bone resorption in response to calcium deficiency. Mediates the osteoprotective effects of estrogen, potentially via acting downstream of estrogen signaling independently of RANKL signaling pathways. Functionally, required for the formation of the gastric paracellular barrier via its role in tight junction formation, thereby involved in the response to gastric acidification. This chain is Claudin-18, found in Rattus norvegicus (Rat).